The chain runs to 400 residues: Phosphoglycerate kinase (400 aa).

Substrate-binding positions include 21–23 (DFN), R37, 60–63 (HFGR), R119, and R152. ATP-binding positions include K205, G296, E327, and 353–356 (GGDT).

The protein belongs to the phosphoglycerate kinase family. As to quaternary structure, monomer.

The protein localises to the cytoplasm. It catalyses the reaction (2R)-3-phosphoglycerate + ATP = (2R)-3-phospho-glyceroyl phosphate + ADP. It functions in the pathway carbohydrate degradation; glycolysis; pyruvate from D-glyceraldehyde 3-phosphate: step 2/5. This is Phosphoglycerate kinase from Aliarcobacter butzleri (strain RM4018) (Arcobacter butzleri).